A 119-amino-acid chain; its full sequence is MKYSKNESRQRRKIRISKKVSGTAERPRLVVYRSNLHVYAQIVNDLDGATLVATSTLALGKNESGLHCNKGGAEKVGIEIARMAKEKNIDKVVFDRNGYLYHGRVKAVADGAREGGLEF.

Belongs to the universal ribosomal protein uL18 family. Part of the 50S ribosomal subunit; part of the 5S rRNA/L5/L18/L25 subcomplex. Contacts the 5S and 23S rRNAs.

In terms of biological role, this is one of the proteins that bind and probably mediate the attachment of the 5S RNA into the large ribosomal subunit, where it forms part of the central protuberance. This is Large ribosomal subunit protein uL18 from Desulfovibrio desulfuricans (strain ATCC 27774 / DSM 6949 / MB).